The sequence spans 248 residues: PF03932 family protein CutC (248 aa).

The protein belongs to the CutC family. Homodimer.

The protein localises to the cytoplasm. This is PF03932 family protein CutC from Salmonella paratyphi B (strain ATCC BAA-1250 / SPB7).